The chain runs to 156 residues: Cell division protein SepF (156 aa).

Belongs to the SepF family. In terms of assembly, homodimer. Interacts with FtsZ.

The protein resides in the cytoplasm. Functionally, cell division protein that is part of the divisome complex and is recruited early to the Z-ring. Probably stimulates Z-ring formation, perhaps through the cross-linking of FtsZ protofilaments. Its function overlaps with FtsA. The chain is Cell division protein SepF from Ruminiclostridium cellulolyticum (strain ATCC 35319 / DSM 5812 / JCM 6584 / H10) (Clostridium cellulolyticum).